A 2481-amino-acid chain; its full sequence is Serine/threonine-protein kinase TOR (2481 aa).

The interval 1 to 31 (MSTSSQSFVAGRPASMASPSQSHRFCGPSAT) is disordered. HEAT repeat units lie at residues 205 to 242 (VHVPEFVDAIWVALRDPQLQVRERAVEALRACLRVIEK), 292 to 329 (SRYREVAEIVLRYLEHRDRLVRLSITSLLPRIAHFLRD), 373 to 410 (HYLPTIMSHLRDAIAPRKGRPLLEAVACVGNIAKAMGS), 434 to 471 (DALDQITISIPSLLPTVQDRLLDCISLVLSKSHYSQAK), 569 to 607 (RLVEEIVEKLLRTAVADADVTVRKSIFVALFGNQCFDDY), 608 to 645 (LAQADSLTAIFASLNDEDLDVREYAISVAGRLSEKNPA), 737 to 775 (QYIPELMPLIVEALMDGAAVAKREVAVSTLGQVVQSTGY), and 781 to 819 (KEYPLLLGLLLKLLKGDLVWSTRREVLKVLGIMGALDPH). Positions 823–847 (RNQQSLSGSHGEVPRGTGDSGQPIP) are disordered. 6 HEAT repeats span residues 866–904 (YYSTVAINSLMRILRDASLLSYHKRVVRSLMIIFKSMGL), 908–945 (PYLPKVLPELFHTVRTSDENLKDFITWGLGTLVSIVRQ), 952–992 (PELL…ALND), 996–1036 (TYLP…GTLD), 1037–1075 (EHMHLLLPALIRLFKVDAPVAIRRDAIKTLTRVIPCVQV), and 1077–1114 (GHISALVHHLKLVLDGKNDELRKDAVDALCCLAHALGE). The segment at 1179–1204 (DPFEEGTDRNHQVNDGRLRTAGEASQ) is disordered. Over residues 1184–1198 (GTDRNHQVNDGRLRT) the composition is skewed to basic and acidic residues. Residues 1309–1887 (LLGALAEKCR…MYPLLVACKS (579 aa)) enclose the FAT domain. Short sequence motifs (nuclear localization signal) lie at residues 1505 to 1512 (VRRAKYDE) and 2075 to 2080 (KQRPRK). The PI3K/PI4K catalytic domain maps to 2065–2378 (FSRQLVVITS…DEDPADIDLP (314 aa)). The tract at residues 2071–2077 (VITSKQR) is G-loop. The interval 2244 to 2252 (GLGDRHPSN) is catalytic loop. Residues 2264–2289 (HIDFGDCFEASMNREKFPEKVPFRLT) are activation loop. The disordered stretch occupies residues 2354-2384 (NNNPNAPADVEPDEEDEDPADIDLPQPQRST). Residues 2363 to 2374 (VEPDEEDEDPAD) are compositionally biased toward acidic residues. Residue Ser-2424 is modified to Phosphoserine. Residues 2449–2481 (HGLSVKVQVQKLINQATSHENLCQNYVGWCPFW) enclose the FATC domain.

Belongs to the PI3/PI4-kinase family. Interacts with RAPTOR1 and itself. Interacts with FKBP12 in a rapamycin-dependent manner. Binds to LST8-1. Hyperactivated upon interaction with cauliflower mosaic virus (CaMV) Tav protein. Activated by phosphorylation on Ser-2424 triggered by cauliflower mosaic virus P6 and auxin. As to expression, highly expressed in root meristems, shoot apical meristem (SAM) and floral buds.

The protein resides in the cytoplasm. It is found in the nucleus. The enzyme catalyses L-seryl-[protein] + ATP = O-phospho-L-seryl-[protein] + ADP + H(+). The catalysed reaction is L-threonyl-[protein] + ATP = O-phospho-L-threonyl-[protein] + ADP + H(+). With respect to regulation, almost insensitive to rapamycin. Strongly repressed by specific active site inhibitors (asTORis) such as AZD-8055, TORIN2 and WYE-132, and, to a lesser extent, by KU63794, WYE-354 and TORIN1, leading to impaired photoautotrophic growth and abnormally early meristematic cells differentiation. Repression by TORIN1 leads to impaired responses to auxin, including gravitropism. Combined treatment with rapamycin and active-site inhibitors (e.g. Torin1 and AZD-8055) results in synergistic inhibition of activity and plant growth. Inhibition by KU63794 leads to reduced auxin content in root tips. AZD-8055 treatment reduces abscisic acid (ABA) levels. In addition, inhibition by AZD-8055 leads to a strong reduction of watermelon mosaic virus (WMV) infection. Functionally, essential cell growth regulator that controls development from early embryo to seed production. Controls plant growth in environmental stress conditions. Acts through the phosphorylation of downstream effectors that are recruited by the binding partner RAPTOR. Acts by activating transcription, protein synthesis and ribosome biogenesis, and inhibiting mRNA degradation and autophagy. Can phosphorylate TAP46, a regulatory subunit of protein phosphatase 2A that modulates cell growth and survival. Involved in modulating the transition from heterotrophic to photoautotrophic growth by regulating the expression of chloroplast- and photosynthesis-associated genes. Essential for auxin signaling transduction, probably acting in polysomes to maintain the active ATPK1/S6K1 (and thus TIF3H1/eIF3h) phosphorylation status that is critical for translation reinitiation (e.g. uORF-mRNAs loading). Promotes abscisic acid (ABA) biosynthesis. Involved in the regulation of sugar-mediated (e.g. glucose and sucrose) glycolysis- and mitochondrial bioenergetics-dependent root growth promotion. Required for sugar (e.g. glucose) promotion of hypocotyl elongation in the dark, by activating the brassinosteroid pathway and stabilizing BZR1. The regulation of BZR1 degradation is dependent on autophagy. Regulates the expression, phosphorylation and ribosome association of MRFs (e.g. MRF1, MRF3 and MRF4), especially under energy-deficient conditions. Its function is as follows. (Microbial infection) Binding to cauliflower mosaic virus (CaMV) Tav protein is critical for both translation reinitiation and viral fitness. When activated by CaMV P6, promotes CaMV translation by inhibiting cellular autophagy and suppressing both silencing and innate immunity, thus conferring sensitivity to P.syringae. In terms of biological role, (Microbial infection) Required during infection by some potyvirus such as Watermelon mosaic virus (WMV) but not for turnip mosaic virus (TuMV). This chain is Serine/threonine-protein kinase TOR, found in Arabidopsis thaliana (Mouse-ear cress).